A 125-amino-acid polypeptide reads, in one-letter code: Small ribosomal subunit protein uS12m (125 aa).

It belongs to the universal ribosomal protein uS12 family. As to quaternary structure, component of the mitochondrial ribosome small subunit.

It localises to the mitochondrion. Its function is as follows. Protein S12 is involved in the translation initiation step. The sequence is that of Small ribosomal subunit protein uS12m (RPS12) from Arabidopsis thaliana (Mouse-ear cress).